Consider the following 593-residue polypeptide: Root phototropism protein 2 (593 aa).

The 69-residue stretch at 32–100 (TDVVVEVGEA…CYGVNFEITV (69 aa)) folds into the BTB domain. One can recognise an NPH3 domain in the interval 187–469 (NWWTEELCIL…LHALYYDQLK (283 aa)). At Tyr410 the chain carries Phosphotyrosine.

This sequence belongs to the NPH3 family. In terms of assembly, interacts with RPT3 and PHOT1. In terms of tissue distribution, expressed in hypocotyls, guard cells and mesophyll cells.

It functions in the pathway protein modification; protein ubiquitination. Functionally, may act as a substrate-specific adapter of an E3 ubiquitin-protein ligase complex (CUL3-RBX1-BTB) which mediates the ubiquitination and subsequent proteasomal degradation of target proteins. Signal transducer of the phototropic response and photo-induced movements. Necessary for root phototropism. Involved in hypocotyl phototropism under high rate but not under low rate light. Regulates stomata opening. Seems to be not involved in chloroplast accumulation and translocation. In Arabidopsis thaliana (Mouse-ear cress), this protein is Root phototropism protein 2 (RPT2).